A 177-amino-acid chain; its full sequence is Large ribosomal subunit protein uL6 (177 aa).

This sequence belongs to the universal ribosomal protein uL6 family. As to quaternary structure, part of the 50S ribosomal subunit.

Functionally, this protein binds to the 23S rRNA, and is important in its secondary structure. It is located near the subunit interface in the base of the L7/L12 stalk, and near the tRNA binding site of the peptidyltransferase center. The chain is Large ribosomal subunit protein uL6 from Dichelobacter nodosus (strain VCS1703A).